Here is a 123-residue protein sequence, read N- to C-terminus: UPF0231 protein PMI2039 (123 aa).

It belongs to the UPF0231 family.

The sequence is that of UPF0231 protein PMI2039 from Proteus mirabilis (strain HI4320).